Reading from the N-terminus, the 440-residue chain is UDP-glycosyltransferase 87A1 (440 aa).

Residues serine 263, 312–314, 329–337, and 351–354 contribute to the UDP-alpha-D-glucose site; these read CDQ, HCGYNSTLE, and FWDQ.

This sequence belongs to the UDP-glycosyltransferase family.

This is UDP-glycosyltransferase 87A1 (UGT87A1) from Arabidopsis thaliana (Mouse-ear cress).